The primary structure comprises 435 residues: Glucoside xylosyltransferase 1 (435 aa).

At M1–R6 the chain is on the cytoplasmic side. A helical; Signal-anchor for type II membrane protein transmembrane segment spans residues V7 to S29. At L30–R435 the chain is on the lumenal side. 2 N-linked (GlcNAc...) asparagine glycosylation sites follow: N168 and N232.

It belongs to the glycosyltransferase 8 family.

The protein localises to the membrane. The enzyme catalyses 3-O-(beta-D-glucosyl)-L-seryl-[EGF-like domain protein] + UDP-alpha-D-xylose = 3-O-[alpha-D-xylosyl-(1-&gt;3)-beta-D-glucosyl]-L-seryl-[EGF-like domain protein] + UDP + H(+). In terms of biological role, glycosyltransferase which elongates the O-linked glucose attached to EGF-like repeats in the extracellular domain of Notch proteins by catalyzing the addition of xylose. This is Glucoside xylosyltransferase 1 (Gxylt1) from Rattus norvegicus (Rat).